Consider the following 261-residue polypeptide: Triosephosphate isomerase (261 aa).

Residue 10–12 (NWK) coordinates substrate. His-100 functions as the Electrophile in the catalytic mechanism. Glu-172 (proton acceptor) is an active-site residue. Substrate-binding positions include Gly-178, Ser-218, and 239 to 240 (GG).

It belongs to the triosephosphate isomerase family. As to quaternary structure, homodimer.

It localises to the cytoplasm. It catalyses the reaction D-glyceraldehyde 3-phosphate = dihydroxyacetone phosphate. The protein operates within carbohydrate biosynthesis; gluconeogenesis. Its pathway is carbohydrate degradation; glycolysis; D-glyceraldehyde 3-phosphate from glycerone phosphate: step 1/1. Involved in the gluconeogenesis. Catalyzes stereospecifically the conversion of dihydroxyacetone phosphate (DHAP) to D-glyceraldehyde-3-phosphate (G3P). The chain is Triosephosphate isomerase from Mycobacterium tuberculosis (strain CDC 1551 / Oshkosh).